A 516-amino-acid chain; its full sequence is Probable rhamnogalacturonase B (516 aa).

The first 21 residues, 1–21, serve as a signal peptide directing secretion; the sequence is MRLHAFTLLSLLGLVPSFAAA. A disulfide bridge links Cys42 with Cys68. N-linked (GlcNAc...) asparagine glycosylation occurs at Asn145. Asp219 functions as the Proton donor in the catalytic mechanism. The cysteines at positions 221 and 238 are disulfide-linked. N-linked (GlcNAc...) asparagine glycosylation occurs at Asn239. His294 is a catalytic residue. Asn321 carries an N-linked (GlcNAc...) asparagine glycan. 2 cysteine pairs are disulfide-bonded: Cys344/Cys350 and Cys372/Cys381. The segment at 462 to 516 is disordered; it reads ETPAAASRSEQVVQGASQETSQPAPESAGPVRSVPTGGNRPSRHRHGHHHFWIAA. Residues 469–485 show a composition bias toward polar residues; the sequence is RSEQVVQGASQETSQPA. A compositionally biased stretch (basic residues) spans 502–516; the sequence is PSRHRHGHHHFWIAA.

This sequence belongs to the glycosyl hydrolase 28 family.

The protein resides in the secreted. The enzyme catalyses Endohydrolysis of alpha-D-GalA-(1-&gt;2)-alpha-L-Rha glycosidic bond in the rhamnogalacturonan I backbone with initial inversion of anomeric configuration releasing oligosaccharides with beta-D-GalA at the reducing end.. Its function is as follows. Pectinolytic enzymes consist of four classes of enzymes: pectine lyase, polygalacturonase, pectin methylesterase and rhamnogalacturonase. Hydrolyzes alpha-D-galacturonopyranosyl-(1,2)-alpha-L-rhamnopyranosyl linkages in the backbone of the hairy regions of pectins. In Neosartorya fischeri (strain ATCC 1020 / DSM 3700 / CBS 544.65 / FGSC A1164 / JCM 1740 / NRRL 181 / WB 181) (Aspergillus fischerianus), this protein is Probable rhamnogalacturonase B (rhgB).